Reading from the N-terminus, the 667-residue chain is Putative L-type lectin-domain containing receptor kinase I.4 (667 aa).

A signal peptide spans 1-21 (MDCRLHLVLFFSCVCLICLSG). Residues 22 to 294 (QQETGFVYNG…PREEKKKLHP (273 aa)) are Extracellular-facing. Residues 24-257 (ETGFVYNGFH…NQYILGWSFS (234 aa)) are legume-lectin like. N-linked (GlcNAc...) asparagine glycosylation is found at Asn55, Asn110, Asn124, Asn128, Asn181, Asn204, and Asn225. A helical membrane pass occupies residues 295 to 315 (LLIGLVILLVIPVLMVLGGVY). Residues 316 to 667 (WYRRKKYAEV…THSILEGYGR (352 aa)) are Cytoplasmic-facing. A Protein kinase domain is found at 350–625 (FVKDALVGKG…QYLSQKQPLP (276 aa)). Residues 356-364 (VGKGGFGKV) and Lys378 each bind ATP. Asp474 functions as the Proton acceptor in the catalytic mechanism.

This sequence in the C-terminal section; belongs to the protein kinase superfamily. Ser/Thr protein kinase family. The protein in the N-terminal section; belongs to the leguminous lectin family.

The protein localises to the cell membrane. The catalysed reaction is L-seryl-[protein] + ATP = O-phospho-L-seryl-[protein] + ADP + H(+). It catalyses the reaction L-threonyl-[protein] + ATP = O-phospho-L-threonyl-[protein] + ADP + H(+). This chain is Putative L-type lectin-domain containing receptor kinase I.4 (LECRK14), found in Arabidopsis thaliana (Mouse-ear cress).